A 128-amino-acid chain; its full sequence is Protein SOB FIVE-LIKE 3 (128 aa).

2 disordered regions span residues 1-26 (MEREECSSSESGWTTYISSRMEEEEE) and 54-128 (KDSD…HKKK). Residues 8–18 (SSESGWTTYIS) are compositionally biased toward polar residues. Residues 11–16 (SGWTTY) carry the SOFL-A motif. Residues 59 to 68 (SMASDASSGP) carry the SOFL-B motif. The segment covering 80–104 (REGLALRNGKGESNDVYSHRIDDKN) has biased composition (basic and acidic residues). Residues 111–118 (RKKEKKKS) carry the Nuclear localization signal motif.

This sequence belongs to the SOFL plant protein family. In terms of tissue distribution, expressed in seedlings, roots, flowers and siliques.

The protein resides in the cytoplasm. It is found in the nucleus. In terms of biological role, involved in cytokinin-mediated development. The polypeptide is Protein SOB FIVE-LIKE 3 (Arabidopsis thaliana (Mouse-ear cress)).